We begin with the raw amino-acid sequence, 460 residues long: Bifunctional protein GlmU (460 aa).

The interval 1 to 228 is pyrophosphorylase; the sequence is MKNYALVLAA…NSLAMGVNDL (228 aa). Residues 8-11, Lys-22, Gln-72, and 77-78 contribute to the UDP-N-acetyl-alpha-D-glucosamine site; these read LAAG and GT. Asp-102 serves as a coordination point for Mg(2+). Positions 139, 154, 169, and 226 each coordinate UDP-N-acetyl-alpha-D-glucosamine. Residue Asn-226 coordinates Mg(2+). Positions 229 to 249 are linker; that stretch reads YAISKAEKYLREYINKDHMLN. Residues 250-460 are N-acetyltransferase; that stretch reads GVSMINPETI…LISPKPKKEE (211 aa). Arg-331 and Lys-349 together coordinate UDP-N-acetyl-alpha-D-glucosamine. Catalysis depends on His-361, which acts as the Proton acceptor. Positions 364 and 375 each coordinate UDP-N-acetyl-alpha-D-glucosamine. Acetyl-CoA contacts are provided by residues 384–385, Ala-421, and Arg-438; that span reads NY.

This sequence in the N-terminal section; belongs to the N-acetylglucosamine-1-phosphate uridyltransferase family. It in the C-terminal section; belongs to the transferase hexapeptide repeat family. As to quaternary structure, homotrimer. It depends on Mg(2+) as a cofactor.

The protein localises to the cytoplasm. It catalyses the reaction alpha-D-glucosamine 1-phosphate + acetyl-CoA = N-acetyl-alpha-D-glucosamine 1-phosphate + CoA + H(+). The enzyme catalyses N-acetyl-alpha-D-glucosamine 1-phosphate + UTP + H(+) = UDP-N-acetyl-alpha-D-glucosamine + diphosphate. Its pathway is nucleotide-sugar biosynthesis; UDP-N-acetyl-alpha-D-glucosamine biosynthesis; N-acetyl-alpha-D-glucosamine 1-phosphate from alpha-D-glucosamine 6-phosphate (route II): step 2/2. It participates in nucleotide-sugar biosynthesis; UDP-N-acetyl-alpha-D-glucosamine biosynthesis; UDP-N-acetyl-alpha-D-glucosamine from N-acetyl-alpha-D-glucosamine 1-phosphate: step 1/1. The protein operates within bacterial outer membrane biogenesis; LPS lipid A biosynthesis. Catalyzes the last two sequential reactions in the de novo biosynthetic pathway for UDP-N-acetylglucosamine (UDP-GlcNAc). The C-terminal domain catalyzes the transfer of acetyl group from acetyl coenzyme A to glucosamine-1-phosphate (GlcN-1-P) to produce N-acetylglucosamine-1-phosphate (GlcNAc-1-P), which is converted into UDP-GlcNAc by the transfer of uridine 5-monophosphate (from uridine 5-triphosphate), a reaction catalyzed by the N-terminal domain. This is Bifunctional protein GlmU from Acholeplasma laidlawii (strain PG-8A).